Reading from the N-terminus, the 336-residue chain is 3-isopropylmalate dehydrogenase (336 aa).

Arg-87, Arg-97, Arg-121, and Asp-211 together coordinate substrate. Mg(2+)-binding residues include Asp-211, Asp-235, and Asp-239. 271-283 contacts NAD(+); sequence GSAPDIAGQGIAD.

This sequence belongs to the isocitrate and isopropylmalate dehydrogenases family. LeuB type 2 subfamily. As to quaternary structure, homodimer. Requires Mg(2+) as cofactor. It depends on Mn(2+) as a cofactor.

It localises to the cytoplasm. The catalysed reaction is (2R,3S)-3-isopropylmalate + NAD(+) = 4-methyl-2-oxopentanoate + CO2 + NADH. It participates in amino-acid biosynthesis; L-leucine biosynthesis; L-leucine from 3-methyl-2-oxobutanoate: step 3/4. In terms of biological role, catalyzes the oxidation of 3-carboxy-2-hydroxy-4-methylpentanoate (3-isopropylmalate) to 3-carboxy-4-methyl-2-oxopentanoate. The product decarboxylates to 4-methyl-2 oxopentanoate. The protein is 3-isopropylmalate dehydrogenase of Mycolicibacterium gilvum (strain PYR-GCK) (Mycobacterium gilvum (strain PYR-GCK)).